The following is a 206-amino-acid chain: Ribonuclease HII (206 aa).

One can recognise an RNase H type-2 domain in the interval 27 to 206; it reads ARIAGVDEAG…CALHRRSFKH (180 aa). A divalent metal cation-binding residues include Asp-33, Glu-34, and Asp-125.

This sequence belongs to the RNase HII family. The cofactor is Mn(2+). It depends on Mg(2+) as a cofactor.

It localises to the cytoplasm. It carries out the reaction Endonucleolytic cleavage to 5'-phosphomonoester.. Endonuclease that specifically degrades the RNA of RNA-DNA hybrids. The protein is Ribonuclease HII of Moorella thermoacetica (strain ATCC 39073 / JCM 9320).